The primary structure comprises 315 residues: MAKSQIALCCMSHSPLLNLPGPAQELLDEIDKAIAAARDFVAEFDPELVVTFSPDHYNGFFYRAMPPFCIGTAAEGVGDYGTHEGPLDVPSDLATDCARAVLDHDVDVALSAAMDVDHGTVQPLQKLFGDATAKPVIPVFINSVATPLGPIRRVRALGAAVGAHLATLGKRVLVIGSGGLSHDPPVPTLATAPPAALDRIVRGVPMTTDQRQARQTAVIEAAREFASGRGTLAPLNPDWDRAFLDIVDSGRLAEVDGWDNGWIAEQAGNSAHEVRTWIAAFAALAAQGEYVTENRFYRAAPELIAGFAIRTAVTT.

H118 serves as the catalytic Proton donor. The active-site Proton acceptor is the H182.

The protein belongs to the LigB/MhpB extradiol dioxygenase family. In terms of assembly, homotetramer. Fe(2+) serves as cofactor.

The enzyme catalyses 3-(2,3-dihydroxyphenyl)propanoate + O2 = (2Z,4E)-2-hydroxy-6-oxonona-2,4-dienedioate + H(+). The catalysed reaction is (2E)-3-(2,3-dihydroxyphenyl)prop-2-enoate + O2 = (2Z,4E,7E)-2-hydroxy-6-oxonona-2,4,7-trienedioate + H(+). It functions in the pathway aromatic compound metabolism; 3-phenylpropanoate degradation. Its function is as follows. Catalyzes the non-heme iron(II)-dependent oxidative cleavage of 2,3-dihydroxyphenylpropionic acid and 2,3-dihydroxicinnamic acid into 2-hydroxy-6-ketononadienedioate and 2-hydroxy-6-ketononatrienedioate, respectively. The polypeptide is 2,3-dihydroxyphenylpropionate/2,3-dihydroxicinnamic acid 1,2-dioxygenase (Mycolicibacterium gilvum (strain PYR-GCK) (Mycobacterium gilvum (strain PYR-GCK))).